We begin with the raw amino-acid sequence, 264 residues long: Caffeoyl-CoA O-methyltransferase 2 (264 aa).

Residues 1–20 show a composition bias toward low complexity; sequence MATTATEATKTTAPAQEQQA. Positions 1-37 are disordered; that stretch reads MATTATEATKTTAPAQEQQANGNGNGEQKTRHSEVGH. Basic and acidic residues predominate over residues 28–37; it reads QKTRHSEVGH. Lys-38 contacts substrate. Residues Thr-80, Glu-102, 104-105, Ser-110, Asp-128, and Ala-157 each bind S-adenosyl-L-methionine; that span reads GV. A substrate-binding site is contributed by Asp-180. Position 180 (Asp-180) interacts with a divalent metal cation. S-adenosyl-L-methionine is bound at residue Asp-182. Positions 206 and 207 each coordinate a divalent metal cation. Asn-211 lines the substrate pocket.

Belongs to the class I-like SAM-binding methyltransferase superfamily. Cation-dependent O-methyltransferase family. CCoAMT subfamily. The cofactor is a divalent metal cation.

It catalyses the reaction (E)-caffeoyl-CoA + S-adenosyl-L-methionine = (E)-feruloyl-CoA + S-adenosyl-L-homocysteine + H(+). The protein operates within aromatic compound metabolism; phenylpropanoid biosynthesis. Its function is as follows. Methylates caffeoyl-CoA to feruloyl-CoA and 5-hydroxyferuloyl-CoA to sinapoyl-CoA. Plays a role in the synthesis of feruloylated polysaccharides. Involved in the reinforcement of the plant cell wall. Also involved in the responding to wounding or pathogen challenge by the increased formation of cell wall-bound ferulic acid polymers. The chain is Caffeoyl-CoA O-methyltransferase 2 (CCOAOMT2) from Zea mays (Maize).